Reading from the N-terminus, the 213-residue chain is Thymidylate kinase (213 aa).

Residue 10-17 (GLEGAGKT) participates in ATP binding.

This sequence belongs to the thymidylate kinase family.

It catalyses the reaction dTMP + ATP = dTDP + ADP. Phosphorylation of dTMP to form dTDP in both de novo and salvage pathways of dTTP synthesis. This is Thymidylate kinase from Escherichia coli O1:K1 / APEC.